A 1369-amino-acid polypeptide reads, in one-letter code: Xanthine dehydrogenase (1369 aa).

Residues 20–106 (GEAVVYVNGV…GMHIITVEGI (87 aa)) enclose the 2Fe-2S ferredoxin-type domain. 8 residues coordinate [2Fe-2S] cluster: Cys-58, Cys-63, Cys-66, Cys-88, Cys-128, Cys-131, Cys-164, and Cys-166. Residues 265–450 (NGFNGIRWYR…LSVILPWTRP (186 aa)) enclose the FAD-binding PCMH-type domain. Residues 293 to 300 (LIIGNSEV), Phe-373, 383 to 387 (SVGGN), Asp-396, Leu-440, and Lys-458 contribute to the FAD site. 2 residues coordinate Mo-molybdopterin: Gln-804 and Phe-835. Residues Glu-839 and Arg-917 each coordinate substrate. Arg-949 provides a ligand contact to Mo-molybdopterin. Residues Phe-951 and Thr-1047 each contribute to the substrate site. A Mo-molybdopterin-binding site is contributed by Ala-1116. Catalysis depends on Glu-1305, which acts as the Proton acceptor.

Belongs to the xanthine dehydrogenase family. Homodimer. Requires [2Fe-2S] cluster as cofactor. It depends on FAD as a cofactor. The cofactor is Mo-molybdopterin.

The catalysed reaction is xanthine + NAD(+) + H2O = urate + NADH + H(+). It carries out the reaction hypoxanthine + NAD(+) + H2O = xanthine + NADH + H(+). Key enzyme involved in purine catabolism. Catalyzes the oxidation of hypoxanthine to xanthine and the oxidation of xanthine to urate. The protein is Xanthine dehydrogenase (XDH) of Oryza sativa subsp. japonica (Rice).